We begin with the raw amino-acid sequence, 236 residues long: Regulatory protein cys-3 (236 aa).

The interval 26 to 89 is disordered; it reads TLGQLQPIQP…MSVPPTPGAR (64 aa). The segment covering 28–37 has biased composition (polar residues); the sequence is GQLQPIQPNP. Residues 99–162 form the bZIP domain; sequence LAAEEDKRKR…KWLKGLVTEK (64 aa). The tract at residues 105 to 137 is basic motif; sequence KRKRNTAASARFRIKKKQREQALEKSAKEMSEK. The tract at residues 141 to 155 is leucine-zipper; it reads LEGRIQALETENKWL. The disordered stretch occupies residues 189–236; the sequence is AAAADKAEAAADKADAERAREESSFCVSTSSPSSDESVDTDNKKRRKD. Residues 193-211 are compositionally biased toward basic and acidic residues; that stretch reads DKAEAAADKADAERAREES. Over residues 212–223 the composition is skewed to low complexity; it reads SFCVSTSSPSSD.

It belongs to the bZIP family. GCN4 subfamily. In terms of assembly, binds DNA as a dimer.

It is found in the nucleus. Turns on the expression of structural genes which encode sulfur-catabolic enzymes. Binds to sequence elements upstream of these genes. In Neurospora crassa (strain ATCC 24698 / 74-OR23-1A / CBS 708.71 / DSM 1257 / FGSC 987), this protein is Regulatory protein cys-3 (cys-3).